A 142-amino-acid chain; its full sequence is Large ribosomal subunit protein uL23 (142 aa).

Belongs to the universal ribosomal protein uL23 family. Component of the large ribosomal subunit. Mature ribosomes consist of a small (40S) and a large (60S) subunit. The 40S subunit contains about 32 different proteins and 1 molecule of RNA (18S). The 60S subunit contains 45 different proteins and 3 molecules of RNA (25S, 5.8S and 5S).

It is found in the cytoplasm. In terms of biological role, component of the ribosome, a large ribonucleoprotein complex responsible for the synthesis of proteins in the cell. The small ribosomal subunit (SSU) binds messenger RNAs (mRNAs) and translates the encoded message by selecting cognate aminoacyl-transfer RNA (tRNA) molecules. The large subunit (LSU) contains the ribosomal catalytic site termed the peptidyl transferase center (PTC), which catalyzes the formation of peptide bonds, thereby polymerizing the amino acids delivered by tRNAs into a polypeptide chain. The nascent polypeptides leave the ribosome through a tunnel in the LSU and interact with protein factors that function in enzymatic processing, targeting, and the membrane insertion of nascent chains at the exit of the ribosomal tunnel. RPL25 is a major component of the universal docking site for these factors at the polypeptide exit tunnel. The polypeptide is Large ribosomal subunit protein uL23 (Candida albicans (strain SC5314 / ATCC MYA-2876) (Yeast)).